The primary structure comprises 489 residues: Poly(A) RNA polymerase GLD2 (489 aa).

The tract at residues 93–118 (RQRFSCPSPHNQSARNSNFTSQPVTR) is disordered. Over residues 100–116 (SPHNQSARNSNFTSQPV) the composition is skewed to polar residues. Aspartate 219 and aspartate 221 together coordinate Mg(2+). The region spanning 386–440 (SLGDLFLGFLRYYATVFKWDKQVISVRMARTLPKSNCKEWKDKFICVEEPFNRTN) is the PAP-associated domain.

Belongs to the DNA polymerase type-B-like family. GLD2 subfamily. Mg(2+) serves as cofactor. It depends on Mn(2+) as a cofactor.

The protein localises to the cytoplasm. The enzyme catalyses RNA(n) + ATP = RNA(n)-3'-adenine ribonucleotide + diphosphate. In terms of biological role, cytoplasmic poly(A) RNA polymerase that adds successive AMP monomers to the 3'-end of specific RNAs, forming a poly(A) tail. In contrast to the canonical nuclear poly(A) RNA polymerase, it only adds poly(A) to selected cytoplasmic mRNAs. May not play a role in replication-dependent histone mRNA degradation. This is Poly(A) RNA polymerase GLD2 from Danio rerio (Zebrafish).